The primary structure comprises 156 residues: Small ribosomal subunit protein uS7 (156 aa).

This sequence belongs to the universal ribosomal protein uS7 family. Part of the 30S ribosomal subunit. Contacts proteins S9 and S11.

In terms of biological role, one of the primary rRNA binding proteins, it binds directly to 16S rRNA where it nucleates assembly of the head domain of the 30S subunit. Is located at the subunit interface close to the decoding center, probably blocks exit of the E-site tRNA. The polypeptide is Small ribosomal subunit protein uS7 (Cronobacter sakazakii (strain ATCC BAA-894) (Enterobacter sakazakii)).